The chain runs to 1016 residues: EMILIN-1 (1016 aa).

The N-terminal stretch at 1-21 is a signal peptide; the sequence is MAPRTLWSCYLCCLLTAAAGA. The region spanning 56-131 is the EMI domain; the sequence is HRNWCAYVVT…QGYGGDDCAE (76 aa). 3 disulfides stabilise this stretch: cysteine 60-cysteine 121, cysteine 85-cysteine 92, and cysteine 120-cysteine 129. Positions 135-182 are disordered; the sequence is PALGPASSTPRPLARPARPNLSGSSAGSPLSGLGGEGPGESEKVQQLE. The span at 139–165 shows a compositional bias: low complexity; it reads PASSTPRPLARPARPNLSGSSAGSPLS. Asparagine 154 is a glycosylation site (N-linked (GlcNAc...) asparagine). A coiled-coil region spans residues 216–256; it reads TAFNGRQQPADAAARPGVHETLNEIQHQLQLLDTRVSTHDQ. Disordered regions lie at residues 257–288 and 383–402; these read ELGH…GPSE and RGTE…GYTS. Positions 266-279 are enriched in low complexity; the sequence is GGSSSSGGSRAPAP. The stretch at 356–420 forms a coiled coil; it reads PELGRRLAEL…EDRFNSTLGP (65 aa). Gly residues predominate over residues 386-397; that stretch reads ELGGAAGQGGHP. Asparagine 415 is a glycosylation site (N-linked (GlcNAc...) asparagine). The tract at residues 416–435 is disordered; sequence STLGPSEEQEESWPGAPGGL. N-linked (GlcNAc...) asparagine glycosylation is found at asparagine 455 and asparagine 561. Residues 576–603 are a coiled coil; it reads AHGDEGCGACGGVQEELGRLRDGVERCS. Asparagine 658 is a glycosylation site (N-linked (GlcNAc...) asparagine). A coiled-coil region spans residues 685–752; sequence IISEINRLQQ…GLQGLREGLS (68 aa). 2 N-linked (GlcNAc...) asparagine glycosylation sites follow: asparagine 766 and asparagine 794. 2 disordered regions span residues 811–863 and 942–961; these read DLTG…VEGA and RVDS…VAES. The region spanning 814–864 is the Collagen-like domain; sequence GPAGEAGPPGPPGLQGPPGPAGPPGSPGKDGQEGPIGPPGPQGEQGVEGAP. A compositionally biased stretch (pro residues) spans 821–839; the sequence is PPGPPGLQGPPGPAGPPGS. Residues 835–857 adopt a coiled-coil conformation; the sequence is GPPGSPGKDGQEGPIGPPGPQGE. The 148-residue stretch at 866 to 1013 folds into the C1q domain; it reads APVPQVAFSA…GALLYGDPEL (148 aa).

In terms of assembly, homotrimer associated through a moderately stable interaction of the C-terminal globular C1q domains, allowing the nucleation of the triple helix and then a further quaternary assembly to higher-order polymers via intermolecular disulfide bonds. Interacts with EMILIN2. Interacts with EFEMP2; this interaction promotes the incorporation of EFEMP2 into the extracellular matrix. In terms of tissue distribution, distributed in tissues where resilience and elastic recoil are prominent. Highest levels in the adult small intestine, aorta, lung, uterus, and appendix and in the fetal spleen, kidney, lung, and heart; intermediate expression was detected in adult liver, ovary, colon, stomach, lymph node and spleen; adult heart, bladder, prostate, adrenal gland, mammary gland, placenta and kidney showed low expression whereas a series of other adult tissues, including skeletal muscle and different regions of adult brain show no expression. Detected in intramuscular nerve bundles, where it particularly localizes in the epineurium, the most external layer of dense connective tissue enclosing the nerve.

It localises to the secreted. It is found in the extracellular space. The protein resides in the extracellular matrix. In terms of biological role, involved in elastic and collagen fibers formation. It is required for EFEMP2 deposition into the extracellular matrix, and collagen network assembly and cross-linking via protein-lysine 6-oxidase/LOX activity. May be responsible for anchoring smooth muscle cells to elastic fibers, and may be involved in the processes that regulate vessel assembly. Has cell adhesive capacity. This Homo sapiens (Human) protein is EMILIN-1 (EMILIN1).